A 1242-amino-acid polypeptide reads, in one-letter code: DNA polymerase catalytic subunit (1242 aa).

Disordered stretches follow at residues 14 to 38 (GAVAGGRRQRSQPGSAQGSGKRPPQ), 644 to 665 (LQSAPSSQDGVSPGSGSNSSSS), 877 to 898 (EGDSEESSALPEGLETSSGGSN), and 1108 to 1163 (TAPQ…KPPS). A compositionally biased stretch (low complexity) spans 653–665 (GVSPGSGSNSSSS). Polar residues predominate over residues 1110–1119 (PQGSSDNGDS). The span at 1145–1155 (ESNRRGGEPAK) shows a compositional bias: basic and acidic residues.

Belongs to the DNA polymerase type-B family. As to quaternary structure, forms a complex with the ssDNA-binding protein UL57, the DNA polymerase processivity factor UL44, and the alkaline exonuclease UL98. Interacts with the putative helicase-primase complex composed of UL70, UL102 and UL105 proteins; these interactions may coordinate leading and lagging strand DNA synthesis at the replication fork.

The protein localises to the host nucleus. The enzyme catalyses DNA(n) + a 2'-deoxyribonucleoside 5'-triphosphate = DNA(n+1) + diphosphate. Functionally, replicates viral genomic DNA in the late phase of lytic infection, producing long concatemeric DNA. The replication complex is composed of six viral proteins: the DNA polymerase, processivity factor, primase, primase-associated factor, helicase, and ssDNA-binding protein. The polypeptide is DNA polymerase catalytic subunit (UL54) (Homo sapiens (Human)).